The sequence spans 395 residues: Ketol-acid reductoisomerase, mitochondrial (395 aa).

The N-terminal 47 residues, 1–47, are a transit peptide targeting the mitochondrion; that stretch reads MLRTQAARLICNSRVITAKRTFALATRAAAYSRPAARFVKPMITTRG. One can recognise a KARI N-terminal Rossmann domain in the interval 57–246; it reads VETVYERADW…AIGSGYVYQT (190 aa). NADP(+) contacts are provided by residues 84–93, 108–113, and 146–150; these read GYGSQGYGQG, RKDGAS, and SDAAQ. His171 is an active-site residue. In terms of domain architecture, KARI C-terminal knotted spans 247 to 394; the sequence is TFEREVNSDL…KEVRKLRPEN (148 aa). 4 residues coordinate Mg(2+): Asp255, Glu259, Glu291, and Glu295. Ser317 is a binding site for substrate. Ser355 carries the post-translational modification Phosphoserine. A hydrophilic region spans residues 363 to 395; sequence DYREKLEKELDTIRNMEIWKVGKEVRKLRPENQ.

Belongs to the ketol-acid reductoisomerase family. It depends on Mg(2+) as a cofactor.

It localises to the mitochondrion. The enzyme catalyses (2R)-2,3-dihydroxy-3-methylbutanoate + NADP(+) = (2S)-2-acetolactate + NADPH + H(+). The catalysed reaction is (2R,3R)-2,3-dihydroxy-3-methylpentanoate + NADP(+) = (S)-2-ethyl-2-hydroxy-3-oxobutanoate + NADPH + H(+). Its pathway is amino-acid biosynthesis; L-isoleucine biosynthesis; L-isoleucine from 2-oxobutanoate: step 2/4. The protein operates within amino-acid biosynthesis; L-valine biosynthesis; L-valine from pyruvate: step 2/4. Functionally, involved in the biosynthesis of branched-chain amino acids (BCAA). Catalyzes the second common step in the parallel biosynthesis of isoleucine and valine. Converts alpha-aceto-alpha-hydroxybutyrate (AHB) to alpha,beta-dihydroxy-beta-methylvalerate (DHMV) and alpha-acetolactate (AL) to alpha,beta-dihydroxy-isovalerate (DHV) in isoleucine and valine biosynthesis, respectively. This Saccharomyces cerevisiae (strain ATCC 204508 / S288c) (Baker's yeast) protein is Ketol-acid reductoisomerase, mitochondrial.